The following is a 469-amino-acid chain: Adenosylhomocysteinase (469 aa).

3 residues coordinate substrate: Thr63, Asp139, and Glu164. 165-167 (TTT) serves as a coordination point for NAD(+). Substrate contacts are provided by Lys194 and Asp198. Residues Asn199, 228–233 (GYGDVG), Glu251, Asn300, 321–323 (IGH), and Asn375 each bind NAD(+).

The protein belongs to the adenosylhomocysteinase family. It depends on NAD(+) as a cofactor.

It localises to the cytoplasm. It carries out the reaction S-adenosyl-L-homocysteine + H2O = L-homocysteine + adenosine. It participates in amino-acid biosynthesis; L-homocysteine biosynthesis; L-homocysteine from S-adenosyl-L-homocysteine: step 1/1. In terms of biological role, may play a key role in the regulation of the intracellular concentration of adenosylhomocysteine. The polypeptide is Adenosylhomocysteinase (Pseudomonas syringae pv. tomato (strain ATCC BAA-871 / DC3000)).